The sequence spans 302 residues: Mas-related G-protein coupled receptor member A3 (302 aa).

At 1-17 (MNETIPGSIDIETLIPD) the chain is on the extracellular side. N-linked (GlcNAc...) asparagine glycosylation is present at asparagine 2. Residues 18–38 (LMIIIFGLVGLTGNAIVFWLL) form a helical membrane-spanning segment. Over 39–46 (GFRMHRTA) the chain is Cytoplasmic. A helical transmembrane segment spans residues 47-67 (FLVYILNLALADFLFLLCHII). Asparagine 68 is a glycosylation site (N-linked (GlcNAc...) asparagine). The Extracellular portion of the chain corresponds to 68 to 81 (NSTVDLLKFTLPKG). A helical membrane pass occupies residues 82 to 102 (IFAFCFHTIKRVLYITGLSML). The Cytoplasmic portion of the chain corresponds to 103–129 (SAISTERCLSVLCPIWYHCRRPEHTST). The helical transmembrane segment at 130–150 (VMCAVIWVLSLLICILDGYFC) threads the bilayer. Residues 151-167 (GYLDNHYFNYSVCQAWD) lie on the Extracellular side of the membrane. Asparagine 159 is a glycosylation site (N-linked (GlcNAc...) asparagine). The helical transmembrane segment at 168–188 (IFIGAYLMFLFVVLCLSTLAL) threads the bilayer. Over 189-211 (LARLFCGARNMKFTRLFVTIMLT) the chain is Cytoplasmic. Residues 212-232 (VLVFLLCGLPWGITWFLLFWI) traverse the membrane as a helical segment. Residues 233–242 (APGVFVLDYS) lie on the Extracellular side of the membrane. A helical membrane pass occupies residues 243–263 (PLLVLTAINSCANPIIYFFVG). Residues 264 to 302 (SFRQRLNKQTLKMVLQKALQDTPETPENMVEMSRNKAEP) lie on the Cytoplasmic side of the membrane.

The protein belongs to the G-protein coupled receptor 1 family. Mas subfamily. Expressed exclusively in dorsal root ganglia and nodose ganglia. Expressed in a subset of sensory neurons that includes nociceptors. Expressed in the subclass of non-peptidergic sensory neurons that are IB4(+) and VR1(-).

The protein localises to the cell membrane. In terms of biological role, orphan receptor. May be a receptor for RFamide-family neuropeptides such as NPFF and NPAF, which are analgesic in vivo. May regulate nociceptor function and/or development, including the sensation or modulation of pain. Activated by the antimalarial drug chloroquine. Mediates chloroquine-induced itch, in a histamine-independent manner. This is Mas-related G-protein coupled receptor member A3 (Mrgpra3) from Mus musculus (Mouse).